A 116-amino-acid chain; its full sequence is Putative BPES syndrome breakpoint region protein (116 aa).

As to expression, seems to be expressed only in testis.

The protein is Putative BPES syndrome breakpoint region protein (BPESC1) of Homo sapiens (Human).